Consider the following 412-residue polypeptide: Peptidase T (412 aa).

Residue histidine 81 participates in Zn(2+) binding. Aspartate 83 is an active-site residue. Aspartate 144 contacts Zn(2+). The Proton acceptor role is filled by glutamate 178. Zn(2+)-binding residues include glutamate 179, aspartate 201, and histidine 383.

It belongs to the peptidase M20B family. Requires Zn(2+) as cofactor.

It is found in the cytoplasm. It carries out the reaction Release of the N-terminal residue from a tripeptide.. Functionally, cleaves the N-terminal amino acid of tripeptides. In Bacillus cereus (strain ATCC 14579 / DSM 31 / CCUG 7414 / JCM 2152 / NBRC 15305 / NCIMB 9373 / NCTC 2599 / NRRL B-3711), this protein is Peptidase T.